A 157-amino-acid chain; its full sequence is Prefoldin subunit alpha (157 aa).

The protein belongs to the prefoldin subunit alpha family. As to quaternary structure, heterohexamer of two alpha and four beta subunits.

The protein resides in the cytoplasm. Its function is as follows. Molecular chaperone capable of stabilizing a range of proteins. Seems to fulfill an ATP-independent, HSP70-like function in archaeal de novo protein folding. The sequence is that of Prefoldin subunit alpha from Methanopyrus kandleri (strain AV19 / DSM 6324 / JCM 9639 / NBRC 100938).